The chain runs to 482 residues: Anthocyanin 3'-O-beta-glucosyltransferase (482 aa).

The active-site Proton acceptor is His-16. His-16 lines the an anthocyanidin pocket. The active-site Charge relay is Asp-119. Residues Ala-349, Gln-351, His-366, Trp-369, Asn-370, Ser-371, and Glu-374 each contribute to the UDP-alpha-D-glucose site. Ala-389 provides a ligand contact to an anthocyanidin. Glu-390 and Gln-391 together coordinate UDP-alpha-D-glucose.

This sequence belongs to the UDP-glycosyltransferase family. The N-terminus is blocked. As to expression, abundant in petals and barely detected in leaves.

The catalysed reaction is delphinidin 3,5-bis-O-beta-D-glucoside + UDP-alpha-D-glucose = delphinidin 3,3',5-tri-O-beta-D-glucoside + UDP + H(+). Functionally, specifically glucosylates the 3'-hydroxy group of delphinidin 3,5-di-O-glucoside to produce gentiodelphin. Shows a strict specificity for UDP-glucose as donor. The polypeptide is Anthocyanin 3'-O-beta-glucosyltransferase (Gentiana triflora (Clustered gentian)).